A 129-amino-acid chain; its full sequence is uncharacterized protein (129 aa).

Positions asparagine 86–glutamate 96 are enriched in acidic residues. The segment at asparagine 86–threonine 116 is disordered. Positions glutamate 103–threonine 116 are enriched in polar residues.

Belongs to the asfivirus D129L family.

This is an uncharacterized protein from African swine fever virus (strain Badajoz 1971 Vero-adapted) (Ba71V).